A 791-amino-acid polypeptide reads, in one-letter code: Metabotropic glutamate receptor-like protein D (791 aa).

The signal sequence occupies residues Met-1–Gly-22. Residues Glu-23–Gln-390 lie on the Extracellular side of the membrane. Asn-72, Asn-168, Asn-279, Asn-290, Asn-306, and Asn-349 each carry an N-linked (GlcNAc...) asparagine glycan. The chain crosses the membrane as a helical span at residues Ile-391–Val-411. Residues Val-412 to Ser-424 are Cytoplasmic-facing. A helical membrane pass occupies residues Pro-425 to Trp-445. Residues Ser-446–Ser-453 are Extracellular-facing. A helical membrane pass occupies residues Cys-454–Val-474. At Lys-475–Asn-495 the chain is on the cytoplasmic side. The chain crosses the membrane as a helical span at residues Leu-496 to Leu-516. Residues Thr-517–Ser-550 lie on the Extracellular side of the membrane. N-linked (GlcNAc...) asparagine glycosylation is present at Asn-545. Residues Thr-551 to Trp-571 traverse the membrane as a helical segment. Over Lys-572–Lys-585 the chain is Cytoplasmic. Residues Ala-586–Ile-606 traverse the membrane as a helical segment. Topologically, residues Ser-607–Lys-615 are extracellular. The helical transmembrane segment at Ile-616–Pro-636 threads the bilayer. Residues Lys-637–Asn-791 are Cytoplasmic-facing. 2 disordered regions span residues Thr-664–Asn-715 and Ile-746–Asn-791. Positions Ser-674–Gly-689 are enriched in gly residues. Residues Glu-749–Asn-760 are compositionally biased toward low complexity. Positions Gln-752 to Leu-781 form a coiled coil. Basic and acidic residues predominate over residues Glu-761–Glu-785.

This sequence in the N-terminal section; belongs to the BMP lipoprotein family. In the C-terminal section; belongs to the G-protein coupled receptor 3 family. GABA-B receptor subfamily.

The protein localises to the membrane. The sequence is that of Metabotropic glutamate receptor-like protein D (grlD) from Dictyostelium discoideum (Social amoeba).